The following is a 398-amino-acid chain: Elongation factor Tu (398 aa).

The tr-type G domain occupies lysine 10–glutamate 207. The tract at residues glycine 19–threonine 26 is G1. Glycine 19–threonine 26 is a GTP binding site. Threonine 26 contributes to the Mg(2+) binding site. A G2 region spans residues glycine 63–asparagine 67. The G3 stretch occupies residues aspartate 84–glycine 87. GTP contacts are provided by residues aspartate 84 to histidine 88 and asparagine 139 to aspartate 142. The tract at residues asparagine 139–aspartate 142 is G4. Residues serine 177 to leucine 179 form a G5 region.

It belongs to the TRAFAC class translation factor GTPase superfamily. Classic translation factor GTPase family. EF-Tu/EF-1A subfamily. Monomer.

The protein localises to the cytoplasm. It carries out the reaction GTP + H2O = GDP + phosphate + H(+). Functionally, GTP hydrolase that promotes the GTP-dependent binding of aminoacyl-tRNA to the A-site of ribosomes during protein biosynthesis. This Streptococcus agalactiae serotype Ia (strain ATCC 27591 / A909 / CDC SS700) protein is Elongation factor Tu.